The chain runs to 38 residues: Large ribosomal subunit protein bL36 (38 aa).

The protein belongs to the bacterial ribosomal protein bL36 family.

This chain is Large ribosomal subunit protein bL36, found in Ralstonia nicotianae (strain ATCC BAA-1114 / GMI1000) (Ralstonia solanacearum).